A 140-amino-acid chain; its full sequence is Large ribosomal subunit protein bL21 (140 aa).

The interval 106–140 (SGVKPAVGARTKIEPAVKPAKAKKSEAEASAEDAN) is disordered.

The protein belongs to the bacterial ribosomal protein bL21 family. In terms of assembly, part of the 50S ribosomal subunit. Contacts protein L20.

This protein binds to 23S rRNA in the presence of protein L20. The sequence is that of Large ribosomal subunit protein bL21 from Paracoccus denitrificans (strain Pd 1222).